The primary structure comprises 208 residues: Small ribosomal subunit protein uS4 (208 aa).

Residues 98 to 158 (GRLDNVVYRM…EKSKKQARIK (61 aa)) enclose the S4 RNA-binding domain.

This sequence belongs to the universal ribosomal protein uS4 family. As to quaternary structure, part of the 30S ribosomal subunit. Contacts protein S5. The interaction surface between S4 and S5 is involved in control of translational fidelity.

In terms of biological role, one of the primary rRNA binding proteins, it binds directly to 16S rRNA where it nucleates assembly of the body of the 30S subunit. Functionally, with S5 and S12 plays an important role in translational accuracy. This Haemophilus ducreyi (strain 35000HP / ATCC 700724) protein is Small ribosomal subunit protein uS4.